Reading from the N-terminus, the 421-residue chain is U-box domain-containing protein 26 (421 aa).

One can recognise a U-box domain in the interval 13–87 (QIPYHFRCPI…QEWCVANRSN (75 aa)).

It catalyses the reaction S-ubiquitinyl-[E2 ubiquitin-conjugating enzyme]-L-cysteine + [acceptor protein]-L-lysine = [E2 ubiquitin-conjugating enzyme]-L-cysteine + N(6)-ubiquitinyl-[acceptor protein]-L-lysine.. It functions in the pathway protein modification; protein ubiquitination. Functionally, functions as an E3 ubiquitin ligase. The chain is U-box domain-containing protein 26 (PUB26) from Arabidopsis thaliana (Mouse-ear cress).